The sequence spans 387 residues: Pepsin A-5 (387 aa).

A signal peptide spans 1–15; it reads MKWLWVLGLVALSEC. The propeptide at 16-62 is activation peptide; the sequence is LVKIPLMKIKSMRENLRESQVLKDYLEKYPRSRAHVLLEQRRNPAVT. One can recognise a Peptidase A1 domain in the interval 74–384; the sequence is YIGIISIGTP…DRANNRIGLA (311 aa). The active site involves aspartate 92. 2 disulfide bridges follow: cysteine 105–cysteine 110 and cysteine 266–cysteine 270. The active site involves aspartate 275. Cysteine 309 and cysteine 343 are disulfide-bonded.

Belongs to the peptidase A1 family. As to expression, expressed in glandular chief cells of the neonatal stomach. Expressed in yolk sacs of the placenta (at protein level).

It localises to the secreted. It carries out the reaction Preferential cleavage: hydrophobic, preferably aromatic, residues in P1 and P1' positions. Cleaves 1-Phe-|-Val-2, 4-Gln-|-His-5, 13-Glu-|-Ala-14, 14-Ala-|-Leu-15, 15-Leu-|-Tyr-16, 16-Tyr-|-Leu-17, 23-Gly-|-Phe-24, 24-Phe-|-Phe-25 and 25-Phe-|-Tyr-26 bonds in the B chain of insulin.. Inhibited by pepstatin A. Shows particularly broad specificity; although bonds involving phenylalanine and leucine are preferred, many others are also cleaved to some extent. May play a role as a specialized neonatal digestive enzyme. This chain is Pepsin A-5, found in Mus musculus (Mouse).